The chain runs to 196 residues: ATP-dependent Clp protease proteolytic subunit (196 aa).

The active-site Nucleophile is S98. Residue H123 is part of the active site.

It belongs to the peptidase S14 family. Fourteen ClpP subunits assemble into 2 heptameric rings which stack back to back to give a disk-like structure with a central cavity, resembling the structure of eukaryotic proteasomes.

The protein resides in the cytoplasm. It carries out the reaction Hydrolysis of proteins to small peptides in the presence of ATP and magnesium. alpha-casein is the usual test substrate. In the absence of ATP, only oligopeptides shorter than five residues are hydrolyzed (such as succinyl-Leu-Tyr-|-NHMec, and Leu-Tyr-Leu-|-Tyr-Trp, in which cleavage of the -Tyr-|-Leu- and -Tyr-|-Trp bonds also occurs).. Cleaves peptides in various proteins in a process that requires ATP hydrolysis. Has a chymotrypsin-like activity. Plays a major role in the degradation of misfolded proteins. The polypeptide is ATP-dependent Clp protease proteolytic subunit (Lactiplantibacillus plantarum (strain ATCC BAA-793 / NCIMB 8826 / WCFS1) (Lactobacillus plantarum)).